A 285-amino-acid chain; its full sequence is Nucleotide-binding protein Gmet_1286 (285 aa).

Position 8 to 15 (8 to 15 (GLSGSGKS)) interacts with ATP. GTP is bound at residue 59 to 62 (DIRG).

It belongs to the RapZ-like family.

Displays ATPase and GTPase activities. In Geobacter metallireducens (strain ATCC 53774 / DSM 7210 / GS-15), this protein is Nucleotide-binding protein Gmet_1286.